A 297-amino-acid chain; its full sequence is HTH-type transcriptional regulator ArgP (297 aa).

Positions Pro-4–Thr-60 constitute an HTH lysR-type domain. The segment at residues Phe-21–Lys-40 is a DNA-binding region (H-T-H motif).

The protein belongs to the LysR transcriptional regulatory family. In terms of assembly, homodimer.

Controls the transcription of genes involved in arginine and lysine metabolism. The protein is HTH-type transcriptional regulator ArgP of Klebsiella pneumoniae (strain 342).